The primary structure comprises 363 residues: Putative dipeptidase YkvY (363 aa).

Mn(2+) is bound by residues aspartate 222, aspartate 233, histidine 297, glutamate 326, and glutamate 340.

It belongs to the peptidase M24B family. Requires Mn(2+) as cofactor.

This Bacillus subtilis (strain 168) protein is Putative dipeptidase YkvY (ykvY).